Consider the following 271-residue polypeptide: 4,5-DOPA dioxygenase extradiol (271 aa).

Histidine 22, histidine 57, histidine 177, and histidine 234 together coordinate Zn(2+).

The protein belongs to the DODA-type extradiol aromatic ring-opening dioxygenase family. In terms of assembly, monomer. The cofactor is Zn(2+).

The protein localises to the cytoplasm. The enzyme catalyses L-dopa + O2 = 4-(L-alanin-3-yl)-2-hydroxy-cis,cis-muconate 6-semialdehyde + H(+). In vitro, opens the cyclic ring of dihydroxy-phenylalanine (DOPA) between carbons 4 and 5, thus producing an unstable seco-DOPA that rearranges nonenzymatically to betalamic acid. The physiological substrate is unknown. This is 4,5-DOPA dioxygenase extradiol (ygiD) from Escherichia coli (strain K12).